Here is a 62-residue protein sequence, read N- to C-terminus: MEWKTCSFCEGTIEPGCGKKYVKKDGSVMHFCSSKCEKNFKLGRVGRKLKWTNTFKRINRGQ.

Residues Cys6, Cys9, Cys32, and Cys36 each coordinate Zn(2+). The C4-type zinc finger occupies 6-36 (CSFCEGTIEPGCGKKYVKKDGSVMHFCSSKC).

The protein belongs to the eukaryotic ribosomal protein eL24 family. In terms of assembly, part of the 50S ribosomal subunit. Forms a cluster with proteins L3 and L14. Requires Zn(2+) as cofactor.

Binds to the 23S rRNA. This Methanococcus maripaludis (strain C5 / ATCC BAA-1333) protein is Large ribosomal subunit protein eL24.